We begin with the raw amino-acid sequence, 150 residues long: Transcription antitermination protein NusB (150 aa).

Belongs to the NusB family.

In terms of biological role, involved in transcription antitermination. Required for transcription of ribosomal RNA (rRNA) genes. Binds specifically to the boxA antiterminator sequence of the ribosomal RNA (rrn) operons. In Streptococcus pyogenes serotype M1, this protein is Transcription antitermination protein NusB.